A 478-amino-acid polypeptide reads, in one-letter code: Trigger factor (478 aa).

A compositionally biased stretch (basic and acidic residues) spans 154–167 (MAKDSRSFEPREEG). Disordered stretches follow at residues 154-173 (MAKD…AQSG) and 441-478 (KEAL…KAAG). Residues 173–258 (GDRVTIDFVG…VKAVAAPGET (86 aa)) form the PPIase FKBP-type domain.

This sequence belongs to the FKBP-type PPIase family. Tig subfamily.

The protein resides in the cytoplasm. The enzyme catalyses [protein]-peptidylproline (omega=180) = [protein]-peptidylproline (omega=0). Involved in protein export. Acts as a chaperone by maintaining the newly synthesized protein in an open conformation. Functions as a peptidyl-prolyl cis-trans isomerase. The chain is Trigger factor from Methylorubrum extorquens (strain CM4 / NCIMB 13688) (Methylobacterium extorquens).